The sequence spans 119 residues: Large ribosomal subunit protein uL18 (119 aa).

It belongs to the universal ribosomal protein uL18 family. As to quaternary structure, part of the 50S ribosomal subunit; part of the 5S rRNA/L5/L18/L25 subcomplex. Contacts the 5S and 23S rRNAs.

In terms of biological role, this is one of the proteins that bind and probably mediate the attachment of the 5S RNA into the large ribosomal subunit, where it forms part of the central protuberance. The protein is Large ribosomal subunit protein uL18 of Nitratidesulfovibrio vulgaris (strain DSM 19637 / Miyazaki F) (Desulfovibrio vulgaris).